A 485-amino-acid polypeptide reads, in one-letter code: NADH-quinone oxidoreductase subunit N (485 aa).

14 consecutive transmembrane segments (helical) span residues 8–28 (LIALLPLLIVGLTVVVVMLSI), 35–55 (FLNATLSVIGLNAALVSLWFV), 71–91 (GFAMLYTGLVQVASLATCTFA), 105–125 (FYLLVLIASLGGILLANANHL), 127–147 (ALFLGIELISLPLFGLIGYAF), 159–179 (YTILSAAASSFLLFGMALVYA), 203–223 (LLAGFGLMIVGLGFKLSLVPF), 235–255 (PAPVSTFLATASKIAIFGVVM), 271–291 (VVLGIIAFASIIFGNLMALSQ), 297–317 (LLGYSSISHLGYLLVALIALQ), 326–346 (VGVYLAGYLFSSLGAFGVVSL), 373–393 (AAVMTVMMLSLAGIPMTLGFI), 408–430 (WWLVAAVVVGSAIGLYYYLRVAV), and 455–475 (IVVLISALLVLVLGVWPQPLI).

This sequence belongs to the complex I subunit 2 family. NDH-1 is composed of 13 different subunits. Subunits NuoA, H, J, K, L, M, N constitute the membrane sector of the complex.

It localises to the cell inner membrane. It carries out the reaction a quinone + NADH + 5 H(+)(in) = a quinol + NAD(+) + 4 H(+)(out). Functionally, NDH-1 shuttles electrons from NADH, via FMN and iron-sulfur (Fe-S) centers, to quinones in the respiratory chain. The immediate electron acceptor for the enzyme in this species is believed to be ubiquinone. Couples the redox reaction to proton translocation (for every two electrons transferred, four hydrogen ions are translocated across the cytoplasmic membrane), and thus conserves the redox energy in a proton gradient. In Salmonella gallinarum (strain 287/91 / NCTC 13346), this protein is NADH-quinone oxidoreductase subunit N.